The following is a 150-amino-acid chain: DNA-directed RNA polymerases I, II, and III subunit RPABC3 (150 aa).

A2 carries the post-translational modification N-acetylalanine.

Belongs to the eukaryotic RPB8 RNA polymerase subunit family. Component of the RNA polymerase I (Pol I), RNA polymerase II (Pol II) and RNA polymerase III (Pol III) complexes consisting of at least 13, 12 and 17 subunits, respectively. Pol I complex consists of a ten-subunit catalytic core composed of POLR1A/RPA1, POLR1B/RPA2, POLR1C/RPAC1, POLR1D/RPAC2, POLR1H/RPA12, POLR2E/RPABC1, POLR2F/RPABC2, POLR2H/RPABC3, POLR2K/RPABC4 and POLR2L/RPABC5; a mobile stalk subunit POLR1F/RPA43 protruding from the core and additional subunits homologous to general transcription factors POLR1E/RPA49 and POLR1G/RPA34. Part of Pol I pre-initiation complex (PIC), in which Pol I core assembles with RRN3 and promoter-bound UTBF and SL1/TIF-IB complex. Pol II complex contains a ten-subunit catalytic core composed of POLR2A/RPB1, POLR2B/RPB2, POLR2C/RPB3, POLR2I/RPB9, POLR2J/RPB11, POLR2E/RPABC1, POLR2F/RPABC2, POLR2H/RPABC3, POLR2K/RPABC4 and POLR2L/RPABC5 and a mobile stalk composed of two subunits POLR2D/RPB4 and POLR2G/RPB7. Part of Pol II(G) complex, in which Pol II core associates with an additional subunit POLR2M; unlike conventional Pol II, Pol II(G) functions as a transcriptional repressor. Part of Pol II pre-initiation complex (PIC), in which Pol II core assembles with Mediator, general transcription factors and other specific initiation factors including GTF2E1, GTF2E2, GTF2F1, GTF2F2, TCEA1, ERCC2, ERCC3, GTF2H2, GTF2H3, GTF2H4, GTF2H5, GTF2A1, GTF2A2, GTF2B and TBP; this large multi-subunit PIC complex mediates DNA unwinding and targets Pol II core to the transcription start site where the first phosphodiester bond forms. Directly interacts with POLR2A. Pol III complex consists of a ten-subunit catalytic core composed of POLR3A/RPC1, POLR3B/RPC2, POLR1C/RPAC1, POLR1D/RPAC2, POLR3K/RPC10, POLR2E/RPABC1, POLR2F/RPABC2, POLR2H/RPABC3, POLR2K/RPABC4 and POLR2L/RPABC5; a mobile stalk composed of two subunits POLR3H/RPC8 and CRCP/RPC9, protruding from the core and functioning primarily in transcription initiation; and additional subunits homologous to general transcription factors of the RNA polymerase II machinery, POLR3C/RPC3-POLR3F/RPC6-POLR3G/RPC7 heterotrimer required for transcription initiation and POLR3D/RPC4-POLR3E/RPC5 heterodimer involved in both transcription initiation and termination.

It localises to the nucleus. It is found in the nucleolus. DNA-dependent RNA polymerase catalyzes the transcription of DNA into RNA using the four ribonucleoside triphosphates as substrates. Common component of RNA polymerases I, II and III which synthesize ribosomal RNA precursors, mRNA precursors and many functional non-coding RNAs, and small RNAs, such as 5S rRNA and tRNAs, respectively. This Bos taurus (Bovine) protein is DNA-directed RNA polymerases I, II, and III subunit RPABC3 (POLR2H).